The primary structure comprises 216 residues: CRIB domain-containing protein RIC7 (216 aa).

One can recognise a CRIB domain in the interval 36-49 (IGNPTDVKHVAHIG). Positions 52 to 216 (GPSDNATAPS…PQFEDDRNGF (165 aa)) are disordered. A compositionally biased stretch (basic and acidic residues) spans 108-121 (SSSEKGSPTKERSD).

Interacts with ARAC4/ROP2 and ARAC11/ROP1. Expressed in roots, leaves, guard cells, stems, flowers, siliques and pollen.

Its subcellular location is the nucleus. The protein localises to the cytoplasm. It is found in the cell membrane. Its function is as follows. Functions as a downstream effector of Rho-related GTP binding proteins of the 'Rho of Plants' (ROPs) family. Participates in the propagation of ROP GTPase signals in specific cellular responses. Functions as a downstream effector of active ARAC4/ROP2 GTPase which is involved in the prevention of excessive stomatal opening upon light stimulation. Is involved in pollen tube growth regulation through its interaction with ARAC11/ROP1. The sequence is that of CRIB domain-containing protein RIC7 (RIC7) from Arabidopsis thaliana (Mouse-ear cress).